Reading from the N-terminus, the 448-residue chain is Zinc finger and BTB domain-containing protein 44 (448 aa).

Residues 31–98 (CDITIRVQDK…AYTATLSINT (68 aa)) form the BTB domain. The span at 289–298 (LSDEEVHEEV) shows a compositional bias: basic and acidic residues. Positions 289-320 (LSDEEVHEEVSQPVSASQSSMSDQQTVPGSEQ) are disordered. Over residues 299 to 313 (SQPVSASQSSMSDQQ) the composition is skewed to low complexity. 2 C2H2-type zinc fingers span residues 394–416 (FQCP…MLIH) and 422–444 (FQCD…RLKH).

Its subcellular location is the nucleus. The protein is Zinc finger and BTB domain-containing protein 44 (zbtb44) of Xenopus tropicalis (Western clawed frog).